Reading from the N-terminus, the 61-residue chain is Metallothionein-1 (61 aa).

Met1 carries the N-acetylmethionine modification. The segment at Met1–Cys29 is beta. The a divalent metal cation site is built by Cys5, Cys7, Cys13, Cys15, Cys19, Cys21, Cys24, Cys26, Cys29, Cys33, Cys34, Cys36, Cys37, Cys41, Cys44, Cys48, Cys50, Cys57, Cys59, and Cys60. The tract at residues Lys30–Ala61 is alpha.

The protein belongs to the metallothionein superfamily. Type 1 family.

Its function is as follows. Metallothioneins have a high content of cysteine residues that bind various heavy metals; these proteins are transcriptionally regulated by both heavy metals and glucocorticoids. The protein is Metallothionein-1 (Mt1) of Mus musculus (Mouse).